We begin with the raw amino-acid sequence, 245 residues long: tRNA pseudouridine synthase A (245 aa).

The active-site Nucleophile is the Asp-52. Tyr-111 lines the substrate pocket.

Belongs to the tRNA pseudouridine synthase TruA family. In terms of assembly, homodimer.

It catalyses the reaction uridine(38/39/40) in tRNA = pseudouridine(38/39/40) in tRNA. Functionally, formation of pseudouridine at positions 38, 39 and 40 in the anticodon stem and loop of transfer RNAs. The sequence is that of tRNA pseudouridine synthase A from Afipia carboxidovorans (strain ATCC 49405 / DSM 1227 / KCTC 32145 / OM5) (Oligotropha carboxidovorans).